Consider the following 389-residue polypeptide: Gibberellin 20 oxidase 2 (389 aa).

A compositionally biased stretch (pro residues) spans 1-17; sequence MVAEHPTPPQPHQPPPM. The interval 1-23 is disordered; that stretch reads MVAEHPTPPQPHQPPPMDSTAGS. The region spanning 224 to 324 is the Fe2OG dioxygenase domain; sequence DSSSIMRCNY…RRSLAFFLCP (101 aa). The Fe cation site is built by His249, Asp251, and His305. Residue Arg315 is part of the active site.

Belongs to the iron/ascorbate-dependent oxidoreductase family. GA20OX subfamily. Fe cation serves as cofactor. The cofactor is L-ascorbate.

The catalysed reaction is gibberellin A12 + 2 2-oxoglutarate + 3 O2 + H(+) = gibberellin A9 + 2 succinate + 3 CO2 + 2 H2O. It catalyses the reaction gibberellin A53 + 2 2-oxoglutarate + 3 O2 + H(+) = gibberellin A20 + 2 succinate + 3 CO2 + 2 H2O. Key oxidase enzyme in the biosynthesis of gibberellin that catalyzes the conversion of GA53 to GA20 via a three-step oxidation at C-20 of the GA skeleton. The chain is Gibberellin 20 oxidase 2 (20ox2) from Oryza sativa subsp. indica (Rice).